The sequence spans 457 residues: Cystathionine beta-lyase (457 aa).

Residues 1–41 (MSTPNSDSPAAQAAKKVFSRLDLDGHNLPPSPAPSSPHNGR) form a disordered region.

This sequence belongs to the trans-sulfuration enzymes family. Requires pyridoxal 5'-phosphate as cofactor.

The protein localises to the cytoplasm. It localises to the nucleus. The enzyme catalyses L,L-cystathionine + H2O = L-homocysteine + pyruvate + NH4(+). It carries out the reaction an S-substituted L-cysteine + H2O = a thiol + pyruvate + NH4(+). It participates in amino-acid biosynthesis; L-methionine biosynthesis via de novo pathway; L-homocysteine from L-cystathionine: step 1/1. Functionally, involved in de novo synthesis of methionine. In Neurospora crassa (strain ATCC 24698 / 74-OR23-1A / CBS 708.71 / DSM 1257 / FGSC 987), this protein is Cystathionine beta-lyase (met-2).